Reading from the N-terminus, the 317-residue chain is Malate dehydrogenase (317 aa).

Residues 7-13 (GAAGGIG) and aspartate 34 contribute to the NAD(+) site. Residues arginine 81 and arginine 87 each contribute to the substrate site. Residues asparagine 94 and 117 to 119 (VTN) each bind NAD(+). 2 residues coordinate substrate: asparagine 119 and arginine 153. Catalysis depends on histidine 177, which acts as the Proton acceptor. Methionine 231 contributes to the NAD(+) binding site.

This sequence belongs to the LDH/MDH superfamily. MDH type 1 family. As to quaternary structure, homodimer.

The enzyme catalyses (S)-malate + NAD(+) = oxaloacetate + NADH + H(+). Catalyzes the reversible oxidation of malate to oxaloacetate. The protein is Malate dehydrogenase of Actinobacillus pleuropneumoniae serotype 7 (strain AP76).